The primary structure comprises 309 residues: Vomeronasal type-1 receptor 52 (309 aa).

Residues 1 to 19 (MNKDHTLYCSVYIRNAFFS) are Extracellular-facing. A helical transmembrane segment spans residues 20–40 (EIGIGISANSCLLLFHTFMFI). Residues 41 to 49 (RGHRPRLTD) lie on the Cytoplasmic side of the membrane. A helical transmembrane segment spans residues 50-70 (LPIGFVALIHLVMLLLAAYIT). The Extracellular portion of the chain corresponds to 71 to 93 (EDFFMSSGGWDDITCKLVIFLHR). The cysteines at positions 85 and 172 are disulfide-linked. A helical transmembrane segment spans residues 94–114 (FFRSLSVCATCLLSVFQAIIL). Over 115–134 (CPQSSHLAKLKQNSPHQLSY) the chain is Cytoplasmic. A helical transmembrane segment spans residues 135 to 155 (FFIFLSIFYTSISSHILIAAI). Over 156 to 187 (PTQNITFVNLIYITNSCSFLPLSSSMQHTFST) the chain is Extracellular. An N-linked (GlcNAc...) asparagine glycan is attached at asparagine 159. A helical transmembrane segment spans residues 188-208 (LLAFRNVFVIGLMGLSTCYMA). Residues 209 to 238 (TLLCRHKTRSQRLQNSKLSPKATPEQRALR) lie on the Cytoplasmic side of the membrane. Residues 239–259 (TILMLMSFFLLMSTFDSIISY) form a helical membrane-spanning segment. Residues 260-268 (SRTILQGNP) are Extracellular-facing. A helical transmembrane segment spans residues 269 to 289 (LPFCFQILVAHSYAAVSPLLV). Over 290 to 309 (LSNEKRITNLLISMYEKIVL) the chain is Cytoplasmic.

It belongs to the G-protein coupled receptor 1 family.

It localises to the cell membrane. In terms of biological role, putative pheromone receptor implicated in the regulation of social and reproductive behavior. This chain is Vomeronasal type-1 receptor 52 (Vmn1r52), found in Mus musculus (Mouse).